The chain runs to 1041 residues: Nuclear migration protein unc-83 (1041 aa).

Disordered stretches follow at residues 258–283, 453–498, and 613–646; these read VGHL…TETV, IHGQ…LEDD, and IRNR…DSIS. Positions 456–465 are enriched in basic residues; it reads QKKPLRRASR. Positions 613–626 are enriched in basic and acidic residues; that stretch reads IRNRDSDTAPEHSD. Coiled coils occupy residues 785–816 and 931–951; these read RSKE…DLLA and KAEL…FNDM. The region spanning 986 to 1041 is the KASH domain; that stretch reads TENEPLTIAEAISSSRLIKFTFALSLLAALAAIFYYHVFGKPFGPHVTYVNGPPPV. Residues 1005-1024 form a helical; Anchor for type IV membrane protein membrane-spanning segment; it reads FTFALSLLAALAAIFYYHVF.

As to quaternary structure, component of the unc-83-unc-84 LINC complex which contains at least unc-83 and unc-84. Within the unc-83-unc-84 LINC complex interacts with unc-84 (via C-terminus); the interaction is probably required to recruit unc-83 to the nuclear envelope where it then recruits dynein and kinesin-1 complexes to regulate nuclear migration. Interacts with bicd-1 and dlc-1. Interacts with nud-2 (via C-terminus); the interaction is direct, and is required for recruitment of nud-2 to the nuclear envelope. Interacts with klc-2; the interaction is direct. In terms of tissue distribution, predominantly expressed in migratory nuclei. Expressed in a variety of cell-types, including cells around the pharynx and in the uterus.

It is found in the nucleus membrane. It localises to the nucleus outer membrane. In terms of biological role, cargo-specific adapter that is involved in nuclear migration during development and thereafter. Component of the unc-83-unc-84 LINC (LInker of Nucleoskeleton and Cytoskeleton) complex where it interacts with unc-84 to form a bridge connecting the nuclear envelope to the cytoskeleton which allows for nuclear transport along microtubules. Within the complex, connects the nuclear envelope to the microtubule cytoskeleton through the kinesin-1 light chain protein klc-2 (most likely within the Kinesin 1 motor complex) to regulate nuclear migrations. Moreover, within the complex, also recruits the large microtubule-associated bicd-1-dlc-1-egal-1 and lis-1-nud-2 complexes to the nuclear envelope to regulate both the bidirectional migration of nuclei and the extent of nuclear migrations. Not required for centrosome attachment to the nucleus. This chain is Nuclear migration protein unc-83, found in Caenorhabditis elegans.